We begin with the raw amino-acid sequence, 295 residues long: MTIDLASIEKFLCELATEKVGPIIKSKSGTQKDYDLKTGSRSVDIVTAIDKQVEKLIWESVKTQYPTFKFIGEESYVKGETVITDDPTFIIDPIDGTTNFVHDFPFSCTSLGLTVNKEPVVGVIYNPHINLLVSASKGNGMRVNNKDYDYKSKLESMGSLILNKSVVALQPGSAREGKNFQTKMATYEKLLSCDYGFVHGFRNLGSSAMTMAYIAMGYLDSYWDGGCYSWDVCAGWCILKEVGGRVVGANPGEWSIDVDNRTYLAVRGTINNESDEQTKYITDFWNCVDGHLKYD.

Mg(2+)-binding residues include Glu-73, Asp-92, Ile-94, Asp-95, and Asp-231. Glu-73 is a binding site for substrate. Substrate-binding positions include 94–97 and Asp-231; that span reads IDGT.

This sequence belongs to the inositol monophosphatase superfamily. The cofactor is Mg(2+).

It is found in the cytoplasm. The protein localises to the nucleus. The catalysed reaction is a myo-inositol phosphate + H2O = myo-inositol + phosphate. It participates in polyol metabolism; myo-inositol biosynthesis; myo-inositol from D-glucose 6-phosphate: step 2/2. Its activity is regulated as follows. Inhibited by Li(+) and Na(+). Responsible for the provision of inositol required for synthesis of phosphatidylinositol and polyphosphoinositides. This is Inositol monophosphatase 1 (INM1) from Saccharomyces cerevisiae (strain ATCC 204508 / S288c) (Baker's yeast).